A 159-amino-acid chain; its full sequence is Phosphopantetheine adenylyltransferase (159 aa).

T9 contributes to the substrate binding site. Residues 9–10 and H17 contribute to the ATP site; that span reads TF. Residues K41, L73, and R87 each contribute to the substrate site. Residues 88 to 90, E98, and 123 to 129 contribute to the ATP site; these read GLR and YSFISST.

It belongs to the bacterial CoaD family. In terms of assembly, homohexamer. Mg(2+) serves as cofactor.

The protein resides in the cytoplasm. It carries out the reaction (R)-4'-phosphopantetheine + ATP + H(+) = 3'-dephospho-CoA + diphosphate. It participates in cofactor biosynthesis; coenzyme A biosynthesis; CoA from (R)-pantothenate: step 4/5. Functionally, reversibly transfers an adenylyl group from ATP to 4'-phosphopantetheine, yielding dephospho-CoA (dPCoA) and pyrophosphate. This is Phosphopantetheine adenylyltransferase from Pseudomonas syringae pv. tomato (strain ATCC BAA-871 / DC3000).